A 431-amino-acid polypeptide reads, in one-letter code: Histidinol dehydrogenase (431 aa).

Positions 130, 191, and 214 each coordinate NAD(+). Substrate-binding residues include serine 237, glutamine 259, and histidine 262. Zn(2+) is bound by residues glutamine 259 and histidine 262. Active-site proton acceptor residues include glutamate 327 and histidine 328. 4 residues coordinate substrate: histidine 328, aspartate 361, glutamate 415, and histidine 420. Aspartate 361 provides a ligand contact to Zn(2+). Residue histidine 420 participates in Zn(2+) binding.

Belongs to the histidinol dehydrogenase family. The cofactor is Zn(2+).

It carries out the reaction L-histidinol + 2 NAD(+) + H2O = L-histidine + 2 NADH + 3 H(+). Its pathway is amino-acid biosynthesis; L-histidine biosynthesis; L-histidine from 5-phospho-alpha-D-ribose 1-diphosphate: step 9/9. Functionally, catalyzes the sequential NAD-dependent oxidations of L-histidinol to L-histidinaldehyde and then to L-histidine. This is Histidinol dehydrogenase from Bradyrhizobium diazoefficiens (strain JCM 10833 / BCRC 13528 / IAM 13628 / NBRC 14792 / USDA 110).